The chain runs to 480 residues: Ribulose bisphosphate carboxylase large chain (480 aa).

The propeptide occupies 1–2 (MS). N-acetylproline is present on proline 3. An N6,N6,N6-trimethyllysine modification is found at lysine 14. Residues asparagine 123 and threonine 173 each coordinate substrate. Lysine 175 (proton acceptor) is an active-site residue. Lysine 177 serves as a coordination point for substrate. Residues lysine 201, aspartate 203, and glutamate 204 each contribute to the Mg(2+) site. An N6-carboxylysine modification is found at lysine 201. Residue histidine 294 is the Proton acceptor of the active site. Substrate is bound by residues arginine 295, histidine 327, and serine 379.

It belongs to the RuBisCO large chain family. Type I subfamily. As to quaternary structure, heterohexadecamer of 8 large chains and 8 small chains; disulfide-linked. The disulfide link is formed within the large subunit homodimers. Mg(2+) is required as a cofactor. The disulfide bond which can form in the large chain dimeric partners within the hexadecamer appears to be associated with oxidative stress and protein turnover.

Its subcellular location is the plastid. It localises to the chloroplast. The enzyme catalyses 2 (2R)-3-phosphoglycerate + 2 H(+) = D-ribulose 1,5-bisphosphate + CO2 + H2O. It carries out the reaction D-ribulose 1,5-bisphosphate + O2 = 2-phosphoglycolate + (2R)-3-phosphoglycerate + 2 H(+). Functionally, ruBisCO catalyzes two reactions: the carboxylation of D-ribulose 1,5-bisphosphate, the primary event in carbon dioxide fixation, as well as the oxidative fragmentation of the pentose substrate in the photorespiration process. Both reactions occur simultaneously and in competition at the same active site. The polypeptide is Ribulose bisphosphate carboxylase large chain (Basella alba (Malabar spinach)).